A 514-amino-acid polypeptide reads, in one-letter code: Pentatricopeptide repeat-containing protein At4g26800 (514 aa).

PPR repeat units lie at residues 122-156 (DLYTCNILVNCFCRCFQPSSALSYLGKMMKLGIEP), 157-191 (DIVTASSLVNGFCLSNSIKDAVYVAGQMEKMGIKR), 192-226 (DVVVDTILIDTLCKNRLVVPALEVLKRMKDRGISP), 227-261 (NVVTYSSLITGLCKSGRLADAERRLHEMDSKKINP), 262-296 (NVITFSALIDAYAKRGKLSKVDSVYKMMIQMSIDP), 297-331 (NVFTYSSLIYGLCMHNRVDEAIKMLDLMISKGCTP), 332-366 (NVVTYSTLANGFFKSSRVDDGIKLLDDMPQRGVAA), 367-401 (NTVSCNTLIKGYFQAGKIDLALGVFGYMTSNGLIP), 402-436 (NIRSYNIVLAGLFANGEVEKALSRFEHMQKTRNDL), 437-471 (DIITYTIMIHGMCKACMVKEAYDLFYKLKFKRVEP), and 472-510 (DFKAYTIMIAELNRAGMRTEADALNRFYQKHVRQNESAP).

The protein belongs to the PPR family. P subfamily.

The sequence is that of Pentatricopeptide repeat-containing protein At4g26800 from Arabidopsis thaliana (Mouse-ear cress).